A 448-amino-acid polypeptide reads, in one-letter code: Exodeoxyribonuclease 7 large subunit (448 aa).

Belongs to the XseA family. Heterooligomer composed of large and small subunits.

The protein resides in the cytoplasm. The catalysed reaction is Exonucleolytic cleavage in either 5'- to 3'- or 3'- to 5'-direction to yield nucleoside 5'-phosphates.. Functionally, bidirectionally degrades single-stranded DNA into large acid-insoluble oligonucleotides, which are then degraded further into small acid-soluble oligonucleotides. This is Exodeoxyribonuclease 7 large subunit from Shewanella baltica (strain OS195).